A 135-amino-acid polypeptide reads, in one-letter code: Integration host factor subunit beta (135 aa).

Over residues 83 to 92 (GKELRERVDR) the composition is skewed to basic and acidic residues. A disordered region spans residues 83–135 (GKELRERVDRTVTQGGGMNGNGHAPHGKTGQSQLGSQSPASLHDDGQLNLVRS). Residues 111–122 (TGQSQLGSQSPA) are compositionally biased toward polar residues.

It belongs to the bacterial histone-like protein family. Heterodimer of an alpha and a beta chain.

This protein is one of the two subunits of integration host factor, a specific DNA-binding protein that functions in genetic recombination as well as in transcriptional and translational control. The protein is Integration host factor subunit beta of Cupriavidus metallidurans (strain ATCC 43123 / DSM 2839 / NBRC 102507 / CH34) (Ralstonia metallidurans).